We begin with the raw amino-acid sequence, 910 residues long: Protein translocase subunit SecA (910 aa).

Residues Gln89, 107 to 111 (GEGKT), and Asp502 each bind ATP. Residues Cys889, Cys891, Cys900, and His901 each coordinate Zn(2+).

Belongs to the SecA family. In terms of assembly, monomer and homodimer. Part of the essential Sec protein translocation apparatus which comprises SecA, SecYEG and auxiliary proteins SecDF-YajC and YidC. Zn(2+) serves as cofactor.

The protein localises to the cell inner membrane. Its subcellular location is the cytoplasm. The catalysed reaction is ATP + H2O + cellular proteinSide 1 = ADP + phosphate + cellular proteinSide 2.. In terms of biological role, part of the Sec protein translocase complex. Interacts with the SecYEG preprotein conducting channel. Has a central role in coupling the hydrolysis of ATP to the transfer of proteins into and across the cell membrane, serving both as a receptor for the preprotein-SecB complex and as an ATP-driven molecular motor driving the stepwise translocation of polypeptide chains across the membrane. The sequence is that of Protein translocase subunit SecA from Bartonella bacilliformis (strain ATCC 35685 / KC583 / Herrer 020/F12,63).